The following is a 523-amino-acid chain: NADH-ubiquinone oxidoreductase chain 2 (523 aa).

Helical transmembrane passes span 3-23 (LFGVLTMILAIALFSLRIPAI), 30-50 (IILLLFSALLSYNSLYMNNIG), 62-82 (VTTITQSIDVFIYLLGALVLL), 110-130 (SVLAEYPLIALFSVLGMSSLI), 135-155 (LISMFLSIELQSFAVYILATI), 170-190 (FLLGSLSSALILLGSSLLYSF), 212-232 (IEISVLLIMVGLLFKVSAAPF), 246-266 (VVTTWLTTMPKIAFLVFILEF), 281-301 (LLLISSLLSLLIGTIGGLAQY), 306-326 (LLTYSTISHVGFLLLALAINN), 333-353 (FLFYLIQYSLTNINVFFILVA), 386-406 (GLSLAICLFSMAGIPPLVGFF), 419-439 (GNFFLAFVAILVSVVSAAYYL), and 490-510 (LVIATITLLLIFFIINPTPLL).

It belongs to the complex I subunit 2 family.

It localises to the mitochondrion inner membrane. The catalysed reaction is a ubiquinone + NADH + 5 H(+)(in) = a ubiquinol + NAD(+) + 4 H(+)(out). Core subunit of the mitochondrial membrane respiratory chain NADH dehydrogenase (Complex I) that is believed to belong to the minimal assembly required for catalysis. Complex I functions in the transfer of electrons from NADH to the respiratory chain. The immediate electron acceptor for the enzyme is believed to be ubiquinone. The sequence is that of NADH-ubiquinone oxidoreductase chain 2 from Rhizopus oryzae (Mucormycosis agent).